The sequence spans 236 residues: Phosphoribosylaminoimidazole-succinocarboxamide synthase (236 aa).

This sequence belongs to the SAICAR synthetase family.

It catalyses the reaction 5-amino-1-(5-phospho-D-ribosyl)imidazole-4-carboxylate + L-aspartate + ATP = (2S)-2-[5-amino-1-(5-phospho-beta-D-ribosyl)imidazole-4-carboxamido]succinate + ADP + phosphate + 2 H(+). The protein operates within purine metabolism; IMP biosynthesis via de novo pathway; 5-amino-1-(5-phospho-D-ribosyl)imidazole-4-carboxamide from 5-amino-1-(5-phospho-D-ribosyl)imidazole-4-carboxylate: step 1/2. The polypeptide is Phosphoribosylaminoimidazole-succinocarboxamide synthase (purC) (Lactococcus lactis subsp. cremoris (Streptococcus cremoris)).